The primary structure comprises 155 residues: Arginine repressor (155 aa).

This sequence belongs to the ArgR family.

It localises to the cytoplasm. Its pathway is amino-acid biosynthesis; L-arginine biosynthesis [regulation]. Its function is as follows. Regulates arginine biosynthesis genes. This is Arginine repressor from Histophilus somni (strain 2336) (Haemophilus somnus).